Reading from the N-terminus, the 251-residue chain is tRNA pseudouridine synthase A (251 aa).

Asp-53 (nucleophile) is an active-site residue. Substrate is bound at residue Tyr-110.

Belongs to the tRNA pseudouridine synthase TruA family. Homodimer.

The enzyme catalyses uridine(38/39/40) in tRNA = pseudouridine(38/39/40) in tRNA. Formation of pseudouridine at positions 38, 39 and 40 in the anticodon stem and loop of transfer RNAs. The chain is tRNA pseudouridine synthase A from Mesoplasma florum (strain ATCC 33453 / NBRC 100688 / NCTC 11704 / L1) (Acholeplasma florum).